The sequence spans 307 residues: tRNA dimethylallyltransferase 1 (307 aa).

10–17 serves as a coordination point for ATP; that stretch reads GPTASGKT. Residue 12 to 17 coordinates substrate; sequence TASGKT. An interaction with substrate tRNA region spans residues 35 to 38; that stretch reads DSRQ.

The protein belongs to the IPP transferase family. Monomer. Mg(2+) is required as a cofactor.

It catalyses the reaction adenosine(37) in tRNA + dimethylallyl diphosphate = N(6)-dimethylallyladenosine(37) in tRNA + diphosphate. Catalyzes the transfer of a dimethylallyl group onto the adenine at position 37 in tRNAs that read codons beginning with uridine, leading to the formation of N6-(dimethylallyl)adenosine (i(6)A). This Geotalea daltonii (strain DSM 22248 / JCM 15807 / FRC-32) (Geobacter daltonii) protein is tRNA dimethylallyltransferase 1.